The chain runs to 444 residues: Gentisate transporter (444 aa).

12 helical membrane passes run 42-64 (AAVL…YGTV), 79-101 (LGTI…GRLS), 108-127 (AAVI…CAFA), 131-153 (WVFG…SVNA), 166-188 (AWAT…LALV), 198-220 (WRFM…MKVI), 252-274 (WISI…LGTW), 289-311 (ALMF…AWAG), 318-340 (RSGV…YPPV), 344-366 (YVIL…AAVA), 378-400 (LGWA…GLLL), and 410-428 (FIMF…SVLL).

This sequence belongs to the major facilitator superfamily. Aromatic acid:H(+) symporter (AAHS) (TC 2.A.1.15) family.

The protein resides in the cell membrane. Functionally, transport of gentisate (2,5-dihydroxybenzoate) into the cell. Does not transport 3-hydroxybenzoate or benzoate. This Corynebacterium glutamicum (strain ATCC 13032 / DSM 20300 / JCM 1318 / BCRC 11384 / CCUG 27702 / LMG 3730 / NBRC 12168 / NCIMB 10025 / NRRL B-2784 / 534) protein is Gentisate transporter (genK).